Here is a 287-residue protein sequence, read N- to C-terminus: Ribosomal RNA-processing protein 8 (287 aa).

Residues 1-62 form a disordered region; it reads MTTEENKTSR…SAPSKRPKPS (62 aa). The span at 9 to 21 shows a compositional bias: basic residues; the sequence is SRNRKRKRQRNPK. A compositionally biased stretch (basic and acidic residues) spans 35 to 46; that stretch reads QNEKKNQRDTKN. Residues His-107, Gly-142, Asp-160, Asp-172, Met-173, and Cys-189 each contribute to the S-adenosyl-L-methionine site.

This sequence belongs to the methyltransferase superfamily. RRP8 family.

It is found in the nucleus. It localises to the nucleolus. In terms of biological role, probable methyltransferase required to silence rDNA. The polypeptide is Ribosomal RNA-processing protein 8 (Arabidopsis thaliana (Mouse-ear cress)).